The sequence spans 1016 residues: KN motif and ankyrin repeat domain-containing protein 4 (1016 aa).

Disordered regions lie at residues 1–26 (MEKI…YPYS), 70–91 (PRNF…QQNW), 235–259 (AEPE…AVQS), 401–485 (LSQE…LPRG), 506–563 (EEGS…SPQD), and 622–755 (AQAP…VSHL). Polar residues-rich tracts occupy residues 70 to 80 (PRNFSLPNSGD) and 246 to 258 (SHLS…SAVQ). The stretch at 346–409 (SSLKNQVLAL…KLSQERASEA (64 aa)) forms a coiled coil. Basic and acidic residues-rich tracts occupy residues 401–414 (LSQE…DRTD) and 445–454 (PECRAPRAEK). The span at 460–469 (VQNNHKQSYP) shows a compositional bias: polar residues. Residues 632–650 (TPAPPPSTPPPPPPPPPEI) are compositionally biased toward pro residues. Thr-639 bears the Phosphothreonine mark. A compositionally biased stretch (acidic residues) spans 695–708 (TSGEDSSPEDLSDS). Composition is skewed to basic and acidic residues over residues 709-727 (ETEK…DLHP) and 745-755 (TSDRGEEVSHL). 5 ANK repeats span residues 838–868 (SGNT…NVDH), 877–905 (VMIT…NVNI), 910–939 (GGQT…DVNL), 943–973 (DGSS…NSSL), and 977–1007 (AGRT…PGRS).

Its subcellular location is the cytoplasm. Functionally, may be involved in the control of cytoskeleton formation by regulating actin polymerization. This is KN motif and ankyrin repeat domain-containing protein 4 (Kank4) from Mus musculus (Mouse).